A 120-amino-acid chain; its full sequence is Aspartate 1-decarboxylase (120 aa).

Residue Ser-25 is the Schiff-base intermediate with substrate; via pyruvic acid of the active site. A Pyruvic acid (Ser) modification is found at Ser-25. A substrate-binding site is contributed by Thr-57. The Proton donor role is filled by Tyr-58. Substrate is bound at residue 72 to 74 (GAA).

Belongs to the PanD family. As to quaternary structure, heterooctamer of four alpha and four beta subunits. Pyruvate serves as cofactor. In terms of processing, is synthesized initially as an inactive proenzyme, which is activated by self-cleavage at a specific serine bond to produce a beta-subunit with a hydroxyl group at its C-terminus and an alpha-subunit with a pyruvoyl group at its N-terminus.

It is found in the cytoplasm. It carries out the reaction L-aspartate + H(+) = beta-alanine + CO2. Its pathway is cofactor biosynthesis; (R)-pantothenate biosynthesis; beta-alanine from L-aspartate: step 1/1. In terms of biological role, catalyzes the pyruvoyl-dependent decarboxylation of aspartate to produce beta-alanine. The polypeptide is Aspartate 1-decarboxylase (Helicobacter hepaticus (strain ATCC 51449 / 3B1)).